A 330-amino-acid chain; its full sequence is Syntaxin-121 (330 aa).

A compositionally biased stretch (polar residues) spans 1-10; the sequence is MNNLFSSSWK. Residues 1-39 form a disordered region; sequence MNNLFSSSWKRTGGGGGGDGDIESGGGVEMAPPPGAAAG. Residues 1–284 lie on the Cytoplasmic side of the membrane; the sequence is MNNLFSSSWK…RKHQKSTRKW (284 aa). The segment covering 12–28 has biased composition (gly residues); that stretch reads TGGGGGGDGDIESGGGV. Residues 212–274 form the t-SNARE coiled-coil homology domain; that stretch reads VAEIQERHGA…DRGREQLVVA (63 aa). A helical; Anchor for type IV membrane protein transmembrane segment spans residues 285-305; it reads TCIAIIILLVLILVVVLPIVL. At 306–330 the chain is on the vesicular side; sequence KFVNNNKSSSSSPAPATPSPPPPTA. Residues 311–330 are disordered; the sequence is NKSSSSSPAPATPSPPPPTA. Pro residues predominate over residues 320–330; sequence PATPSPPPPTA.

It belongs to the syntaxin family. As to quaternary structure, interacts with SNAP32. In terms of tissue distribution, expressed in roots, stems, leaf blades and leaf sheaths.

It is found in the cell membrane. In terms of biological role, vesicle trafficking protein that functions in the secretory pathway. Involved in plant defense by mediating host resistance to the rice blast fungus Magnaporthe oryzae. The interaction with SNAP32 may contribute to host resistance to the rice blast fungus. This is Syntaxin-121 from Oryza sativa subsp. japonica (Rice).